A 347-amino-acid polypeptide reads, in one-letter code: NADH-ubiquinone oxidoreductase chain 2 (347 aa).

10 consecutive transmembrane segments (helical) span residues proline 3–serine 23, histidine 25–methionine 45, tyrosine 59–leucine 79, methionine 89–serine 109, isoleucine 149–glycine 169, isoleucine 178–threonine 198, methionine 200–isoleucine 220, methionine 237–leucine 257, glutamate 274–methionine 294, and leucine 325–serine 345.

This sequence belongs to the complex I subunit 2 family. In terms of assembly, core subunit of respiratory chain NADH dehydrogenase (Complex I) which is composed of 45 different subunits. Interacts with TMEM242.

The protein localises to the mitochondrion inner membrane. It catalyses the reaction a ubiquinone + NADH + 5 H(+)(in) = a ubiquinol + NAD(+) + 4 H(+)(out). Its function is as follows. Core subunit of the mitochondrial membrane respiratory chain NADH dehydrogenase (Complex I) which catalyzes electron transfer from NADH through the respiratory chain, using ubiquinone as an electron acceptor. Essential for the catalytic activity and assembly of complex I. The chain is NADH-ubiquinone oxidoreductase chain 2 from Sus scrofa (Pig).